The following is a 344-amino-acid chain: uncharacterized protein (344 aa).

The segment at 95–344 is disordered; it reads TINPEDANED…TPAKKNSKGR (250 aa). Basic and acidic residues predominate over residues 103 to 123; sequence EDAKVKNSLKLEKEEGSDEKS. Positions 135-155 are enriched in acidic residues; that stretch reads SDDESDNSNDSEESEAEDSDQ. A compositionally biased stretch (low complexity) spans 191 to 200; that stretch reads SAKNAKASKP. Residues 244 to 259 show a composition bias toward acidic residues; sequence SEDEDSGSDNSEEESE. Over residues 265 to 276 the composition is skewed to basic residues; sequence ASSKKPPSKSSK. Residues 281 to 314 are compositionally biased toward acidic residues; that stretch reads EDEDEDSGQSESEHSEEESNSDEDSGQSEEESEE. The segment covering 331–344 has biased composition (basic residues); the sequence is TAKKTPAKKNSKGR.

This is an uncharacterized protein from Acanthamoeba polyphaga (Amoeba).